The chain runs to 175 residues: Pre-mRNA-splicing factor SNT309 (175 aa).

In terms of assembly, belongs to the NTC complex (or PRP19-associated complex), composed of at least CEF1, CLF1, ISY1, NTC20, SNT309, SYF1, SYF2, and PRP19. The NTC complex associates with the spliceosome after the release of the U1 and U4 snRNAs and forms the CWC spliceosome subcomplex (or CEF1-associated complex) reminiscent of a late-stage spliceosome composed also of the U2, U5 and U6 snRNAs and at least BUD13, BUD31, BRR2, CDC40, CUS1, CWC2, CWC15, CWC21, CWC22, CWC23, CWC24, CWC25, CWC27, ECM2, HSH155, IST3, LEA1, MSL1, PRP8, PRP9, PRP11, PRP21, PRP22, PRP45, PRP46, SLU7, SMB1, SMD1, SMD2, SMD3, SMX2, SMX3, SNU114, SPP2, RSE1 and YJU2. Interacts with PRP19.

The protein localises to the nucleus. In terms of biological role, involved in pre-mRNA splicing by stabilizing the NTC (or PRP19-associated complex). As a component of the NTC complex, associates to the spliceosome to mediate conformational rearrangement or to stabilize the structure of the spliceosome after U4 snRNA dissociation, which leads to spliceosome maturation. The protein is Pre-mRNA-splicing factor SNT309 (SNT309) of Saccharomyces cerevisiae (strain ATCC 204508 / S288c) (Baker's yeast).